The following is a 458-amino-acid chain: Major capsid protein (458 aa).

A coiled-coil region spans residues Leu21–Glu110.

It belongs to the HK97 phage major capsid protein family. Interacts with the decoration protein; each hexon binds a single copy of the decoration protein. Interacts with the portal protein. Post-translationally, the scaffolding domain delta is cleaved by the prohead protease and lost after assembly. The major capsid protein precursors together with both the portal complex and the maturation protease form prohead I. All copies of the major capsid protein precursor are cleaved to the mature major capsid protein by release of the scaffolding domain delta, yielding the metastable prohead II.

Its subcellular location is the virion. In terms of biological role, major capsid protein that self-associates to form 120 hexamers and 11 pentamers, building the T=13 icosahedral capsid which about 860 Angstroms in diameter. Responsible for its self-assembly into a procapsid. The phage does not need to encode a separate scaffolfing protein because its capsid protein contains the delta domain that carries that function. The capsid gains its final stability through the reorganization of the subunits that takes place upon expansion. DNA encapsidation through the portal triggers capsid expansion and the binding of the decoration protein to the capsid exterior. Might play a role in counteracting the host Pycsar defense system that is mediated by pyrimidine cyclases and leads to abortive infection. The chain is Major capsid protein from Escherichia coli (Enterobacteria phage T5).